Reading from the N-terminus, the 493-residue chain is Glutamate--tRNA ligase (493 aa).

The short motif at Pro10–Thr20 is the 'HIGH' region element. Positions Lys251–Arg255 match the 'KMSKS' region motif. Residue Lys254 participates in ATP binding.

It belongs to the class-I aminoacyl-tRNA synthetase family. Glutamate--tRNA ligase type 1 subfamily. As to quaternary structure, monomer.

It is found in the cytoplasm. It catalyses the reaction tRNA(Glu) + L-glutamate + ATP = L-glutamyl-tRNA(Glu) + AMP + diphosphate. Its function is as follows. Catalyzes the attachment of glutamate to tRNA(Glu) in a two-step reaction: glutamate is first activated by ATP to form Glu-AMP and then transferred to the acceptor end of tRNA(Glu). The polypeptide is Glutamate--tRNA ligase (Marinomonas sp. (strain MWYL1)).